A 658-amino-acid chain; its full sequence is Threonine--tRNA ligase (658 aa).

The 64-residue stretch at 1 to 64 (MSNTVSLQFP…GASGKVEIIT (64 aa)) folds into the TGS domain. The tract at residues 246–548 (DHRRLGREMD…LIENFAGHMP (303 aa)) is catalytic. Residues Cys-343, His-394, and His-525 each contribute to the Zn(2+) site.

Belongs to the class-II aminoacyl-tRNA synthetase family. Homodimer. Zn(2+) is required as a cofactor.

Its subcellular location is the cytoplasm. The catalysed reaction is tRNA(Thr) + L-threonine + ATP = L-threonyl-tRNA(Thr) + AMP + diphosphate + H(+). In terms of biological role, catalyzes the attachment of threonine to tRNA(Thr) in a two-step reaction: L-threonine is first activated by ATP to form Thr-AMP and then transferred to the acceptor end of tRNA(Thr). Also edits incorrectly charged L-seryl-tRNA(Thr). In Brucella canis (strain ATCC 23365 / NCTC 10854 / RM-666), this protein is Threonine--tRNA ligase.